A 710-amino-acid chain; its full sequence is DNA-directed RNA polymerase III subunit RPC5 (710 aa).

Basic and acidic residues predominate over residues 146–155 (DAKHREREAA). Residues 146–169 (DAKHREREAANEAGDSSQDEAEED) are disordered. 2 positions are modified to phosphoserine: S161 and S162. K171 participates in a covalent cross-link: Glycyl lysine isopeptide (Lys-Gly) (interchain with G-Cter in SUMO2). S192 carries the phosphoserine modification. A Phosphotyrosine modification is found at Y224. K432 is covalently cross-linked (Glycyl lysine isopeptide (Lys-Gly) (interchain with G-Cter in SUMO2)). K498 is covalently cross-linked (Glycyl lysine isopeptide (Lys-Gly) (interchain with G-Cter in SUMO1); alternate). K498 participates in a covalent cross-link: Glycyl lysine isopeptide (Lys-Gly) (interchain with G-Cter in SUMO2); alternate. The segment at 498-526 (KEEPLSEEEADGAELEAEEEEPMDTAPST) is disordered. Residues 502-520 (LSEEEADGAELEAEEEEPM) show a composition bias toward acidic residues. Residue S503 is modified to Phosphoserine. Positions 558–710 (NPVACELKAF…MWYLKGTVQS (153 aa)) are required for Pol III complex stability. K661 is covalently cross-linked (Glycyl lysine isopeptide (Lys-Gly) (interchain with G-Cter in SUMO2)).

Component of the RNA polymerase III complex consisting of at least 17 subunits: a ten-subunit horseshoe-shaped catalytic core composed of POLR3A/RPC1, POLR3B/RPC2, POLR1C/RPAC1, POLR1D/RPAC2, POLR3K/RPC10, POLR2E/RPABC1, POLR2F/RPABC2, POLR2H/RPABC3, POLR2K/RPABC4 and POLR2L/RPABC5; the stalk composed of two subunits POLR3H/RPC8 and CRCP/RPC9, forming a structural mobile part that protrudes out of the core and functions primarily in transcription initiation; and additional subunits homologous to general transcription factors of the RNA polymerase II machinery, POLR3D/RPC4-POLR3E/RPC5 heterodimer and POLR3/CRPC3-POLR3F/RPC6-POLR3G/RPC7 heterotrimer.

It localises to the nucleus. DNA-dependent RNA polymerase catalyzes the transcription of DNA into RNA using the four ribonucleoside triphosphates as substrates. Specific peripheric component of RNA polymerase III (Pol III) which synthesizes small non-coding RNAs including 5S rRNA, snRNAs, tRNAs and miRNAs from at least 500 distinct genomic loci. Assembles with POLR3D/RPC4 forming a subcomplex that binds the Pol III core. Enables recruitment of Pol III at transcription initiation site and drives transcription initiation from both type 2 and type 3 DNA promoters. Required for efficient transcription termination and reinitiation. Plays a key role in sensing and limiting infection by intracellular bacteria and DNA viruses. Acts as a nuclear and cytosolic DNA sensor involved in innate immune response. Can sense non-self dsDNA that serves as template for transcription into dsRNA. The non-self RNA polymerase III transcripts, such as Epstein-Barr virus-encoded RNAs (EBERs) induce type I interferon and NF-kappa-B through the RIG-I pathway. In Mus musculus (Mouse), this protein is DNA-directed RNA polymerase III subunit RPC5.